The chain runs to 537 residues: 4-coumarate--CoA ligase (537 aa).

Residues Ser-189, Ser-190, Gly-191, Thr-192, Thr-193, and Lys-197 each contribute to the ATP site. Positions 239 and 243 each coordinate (E)-4-coumaroyl-AMP. Residue Lys-260 coordinates CoA. Residues 262-331 (NLTTCLELIQ…ERFPKAIFGQ (70 aa)) form an SBD1 region. (E)-4-coumaroyl-AMP-binding residues include Ala-309, Gln-331, Gly-332, Thr-336, and Met-344. The ATP site is built by Gln-331, Gly-332, and Thr-336. The tract at residues 332 to 399 (GYGMTEAGPV…IRGPEIMKGY (68 aa)) is SBD2. Residues Asp-420 and Arg-435 each coordinate ATP. (E)-4-coumaroyl-AMP contacts are provided by Lys-437 and Lys-441. CoA-binding residues include Lys-443 and Gly-444. Lys-524 contacts ATP.

The protein belongs to the ATP-dependent AMP-binding enzyme family. The cofactor is Mg(2+).

The catalysed reaction is (E)-4-coumarate + ATP + CoA = (E)-4-coumaroyl-CoA + AMP + diphosphate. The enzyme catalyses (E)-4-coumarate + ATP + H(+) = (E)-4-coumaroyl-AMP + diphosphate. It catalyses the reaction (E)-4-coumaroyl-AMP + CoA = (E)-4-coumaroyl-CoA + AMP + H(+). It participates in phytoalexin biosynthesis; 3,4',5-trihydroxystilbene biosynthesis; 3,4',5-trihydroxystilbene from trans-4-coumarate: step 1/2. Carboxylate--CoA ligase that may use 4-coumarate as substrate. Follows a two-step reaction mechanism, wherein the carboxylate substrate first undergoes adenylation by ATP, followed by a thioesterification in the presence of CoA to yield the final CoA thioester. In Pinus taeda (Loblolly pine), this protein is 4-coumarate--CoA ligase (4CL).